The sequence spans 111 residues: UPF0060 membrane protein Cbei_2176 (111 aa).

4 consecutive transmembrane segments (helical) span residues 7-27 (ILYF…IWIW), 33-53 (SYLY…IPTL), 60-80 (FGKV…LWGW), and 85-105 (IVPD…VIVI).

It belongs to the UPF0060 family.

The protein localises to the cell membrane. This is UPF0060 membrane protein Cbei_2176 from Clostridium beijerinckii (strain ATCC 51743 / NCIMB 8052) (Clostridium acetobutylicum).